The chain runs to 560 residues: Beta-hexosaminidase subunit B1 (560 aa).

Positions 1–25 are cleaved as a signal peptide; it reads MIILKRNIVFLLIIIIVLGIFIATS. 7 N-linked (GlcNAc...) asparagine glycosylation sites follow: N59, N69, N81, N99, N161, N293, and N346. The active-site Proton donor is the E359. 4 N-linked (GlcNAc...) asparagine glycosylation sites follow: N366, N436, N472, and N547.

It belongs to the glycosyl hydrolase 20 family.

The protein localises to the lysosome. It carries out the reaction Hydrolysis of terminal non-reducing N-acetyl-D-hexosamine residues in N-acetyl-beta-D-hexosaminides.. Functionally, responsible for the degradation of GM2 gangliosides, and a variety of other molecules containing terminal N-acetyl hexosamines. In Dictyostelium discoideum (Social amoeba), this protein is Beta-hexosaminidase subunit B1 (hexb1).